A 213-amino-acid polypeptide reads, in one-letter code: ATP phosphoribosyltransferase (213 aa).

The protein belongs to the ATP phosphoribosyltransferase family. Short subfamily. As to quaternary structure, heteromultimer composed of HisG and HisZ subunits.

It is found in the cytoplasm. It catalyses the reaction 1-(5-phospho-beta-D-ribosyl)-ATP + diphosphate = 5-phospho-alpha-D-ribose 1-diphosphate + ATP. The protein operates within amino-acid biosynthesis; L-histidine biosynthesis; L-histidine from 5-phospho-alpha-D-ribose 1-diphosphate: step 1/9. Its function is as follows. Catalyzes the condensation of ATP and 5-phosphoribose 1-diphosphate to form N'-(5'-phosphoribosyl)-ATP (PR-ATP). Has a crucial role in the pathway because the rate of histidine biosynthesis seems to be controlled primarily by regulation of HisG enzymatic activity. In Shouchella clausii (strain KSM-K16) (Alkalihalobacillus clausii), this protein is ATP phosphoribosyltransferase.